Reading from the N-terminus, the 253-residue chain is Zinc import ATP-binding protein ZnuC (253 aa).

Residues 6–227 form the ABC transporter domain; the sequence is VTLNKISVTF…FGNRGAEQLA (222 aa). ATP is bound at residue 38 to 45; it reads GPNGAGKS.

Belongs to the ABC transporter superfamily. Zinc importer (TC 3.A.1.15.5) family. The complex is composed of two ATP-binding proteins (ZnuC), two transmembrane proteins (ZnuB) and a solute-binding protein (ZnuA).

Its subcellular location is the cell inner membrane. The enzyme catalyses Zn(2+)(out) + ATP(in) + H2O(in) = Zn(2+)(in) + ADP(in) + phosphate(in) + H(+)(in). Functionally, part of the ABC transporter complex ZnuABC involved in zinc import. Responsible for energy coupling to the transport system. In Yersinia pestis bv. Antiqua (strain Antiqua), this protein is Zinc import ATP-binding protein ZnuC.